A 527-amino-acid chain; its full sequence is MNSVDLTADLQALLTCPNVRHNLSAAQLTEKVLSRNEGILTSTGAVRATTGAYTGRSPKDKFIVEEESTKNKIDWGPVNQPISEEAFERLYTKVVSYLKERDELFVFEGFAGADEKYRLPITVVNEFAWHNLFARQLFIRPEGNDKKTVEQPFTILSAPHFKADPKTDGTHSETFIIVSFEKRTILIGGTEYAGEMKKSIFSIMNFLLPERDILSMHCSANVGEKGDVALFFGLSGTGKTTLSADADRKLIGDDEHGWSDTGVFNIEGGCYAKCIHLSEEKEPQIFNAIRFGSVLENVVVDEDTREANYDDSFYTENTRAAYPIHMINNIVTPSMAGHPSAIVFLTADAFGVLPPISKLTKEQAMYHFLSGYTSKLAGTERGVTSPETTFSTCFGSPFLPLPAHVYAEMLGKKIDEHGADVFLVNTGWTGGGYGTGERMKLSYTRAMVKAAIEGKLEDAEMITDDIFGLHIPAHVPGVPDHILQPENTWTNKEEYKEKAVYLANEFKENFKKFAHTDAIAQAGGPLV.

Arginine 56, tyrosine 192, and lysine 198 together coordinate substrate. ATP contacts are provided by residues lysine 198, histidine 217, and 233–241; that span reads GLSGTGKTT. Mn(2+) is bound by residues lysine 198 and histidine 217. Residue aspartate 254 coordinates Mn(2+). The ATP site is built by glutamate 282, arginine 319, and threonine 444. Residue arginine 319 coordinates substrate.

It belongs to the phosphoenolpyruvate carboxykinase (ATP) family. Mn(2+) is required as a cofactor.

It is found in the cytoplasm. It carries out the reaction oxaloacetate + ATP = phosphoenolpyruvate + ADP + CO2. It functions in the pathway carbohydrate biosynthesis; gluconeogenesis. Functionally, involved in the gluconeogenesis. Catalyzes the conversion of oxaloacetate (OAA) to phosphoenolpyruvate (PEP) through direct phosphoryl transfer between the nucleoside triphosphate and OAA. This chain is Phosphoenolpyruvate carboxykinase (ATP), found in Bacillus subtilis (strain 168).